Consider the following 358-residue polypeptide: Alanine racemase, biosynthetic (358 aa).

K34 functions as the Proton acceptor; specific for D-alanine in the catalytic mechanism. Residue K34 is modified to N6-(pyridoxal phosphate)lysine. R130 is a substrate binding site. Y254 (proton acceptor; specific for L-alanine) is an active-site residue. M302 contributes to the substrate binding site.

The protein belongs to the alanine racemase family. The cofactor is pyridoxal 5'-phosphate.

The enzyme catalyses L-alanine = D-alanine. It participates in amino-acid biosynthesis; D-alanine biosynthesis; D-alanine from L-alanine: step 1/1. Its pathway is cell wall biogenesis; peptidoglycan biosynthesis. Its function is as follows. Catalyzes the interconversion of L-alanine and D-alanine. Provides the D-alanine required for cell wall biosynthesis. The sequence is that of Alanine racemase, biosynthetic (alr) from Pseudomonas aeruginosa (strain ATCC 15692 / DSM 22644 / CIP 104116 / JCM 14847 / LMG 12228 / 1C / PRS 101 / PAO1).